Consider the following 553-residue polypeptide: Zinc finger protein 324A (553 aa).

In terms of domain architecture, KRAB spans 1 to 72 (MAFEDVAVYF…SGTDTTLSRT (72 aa)). The Nuclear localization signal signature appears at 130–135 (PSRERK). The interval 186–221 (GRQPRTPERQKPCAQEVPGRTFGSAQDLEAAGGRGH) is disordered. 9 C2H2-type zinc fingers span residues 257–279 (FECR…LRTH), 285–307 (YECA…QRIH), 313–335 (YACP…QRIH), 341–363 (FRCS…RKIH), 369–391 (YACA…ERTH), 397–419 (FVCA…QRVH), 425–447 (FACP…QLLH), 453–475 (FRCV…RRIH), and 481–503 (FVCT…QRIH). The tract at residues 502 to 553 (IHTGEKTVRRSRASLHPQARSVAGASSEGAPAKETEPTPASGPAAVSQPAEV) is disordered.

This sequence belongs to the krueppel C2H2-type zinc-finger protein family. As to expression, expressed at high levels in the spleen, thymus, and PBMC, at low levels in the prostate, ovary, small intestine, colon (mucosal lining), placenta, lung, and pancreas, and very weakly expressed in the liver and kidney.

It is found in the nucleus. May be involved in transcriptional regulation. May be involved in regulation of cell proliferation. The chain is Zinc finger protein 324A (ZNF324) from Homo sapiens (Human).